A 95-amino-acid polypeptide reads, in one-letter code: Aspartyl/glutamyl-tRNA(Asn/Gln) amidotransferase subunit C (95 aa).

It belongs to the GatC family. In terms of assembly, heterotrimer of A, B and C subunits.

The enzyme catalyses L-glutamyl-tRNA(Gln) + L-glutamine + ATP + H2O = L-glutaminyl-tRNA(Gln) + L-glutamate + ADP + phosphate + H(+). It catalyses the reaction L-aspartyl-tRNA(Asn) + L-glutamine + ATP + H2O = L-asparaginyl-tRNA(Asn) + L-glutamate + ADP + phosphate + 2 H(+). Functionally, allows the formation of correctly charged Asn-tRNA(Asn) or Gln-tRNA(Gln) through the transamidation of misacylated Asp-tRNA(Asn) or Glu-tRNA(Gln) in organisms which lack either or both of asparaginyl-tRNA or glutaminyl-tRNA synthetases. The reaction takes place in the presence of glutamine and ATP through an activated phospho-Asp-tRNA(Asn) or phospho-Glu-tRNA(Gln). This is Aspartyl/glutamyl-tRNA(Asn/Gln) amidotransferase subunit C from Desulfosudis oleivorans (strain DSM 6200 / JCM 39069 / Hxd3) (Desulfococcus oleovorans).